The chain runs to 244 residues: Probable Ni/Fe-hydrogenase B-type cytochrome subunit (244 aa).

4 consecutive transmembrane segments (helical) span residues L39 to G59, F73 to M93, F150 to Y171, and L204 to I221.

The protein belongs to the HupC/HyaC/HydC family.

The protein localises to the cell membrane. Its function is as follows. Probable b-type cytochrome. This chain is Probable Ni/Fe-hydrogenase B-type cytochrome subunit (hoxZ), found in Cupriavidus necator (strain ATCC 17699 / DSM 428 / KCTC 22496 / NCIMB 10442 / H16 / Stanier 337) (Ralstonia eutropha).